The primary structure comprises 708 residues: Leukotoxin translocation ATP-binding protein LktB (708 aa).

A Peptidase C39 domain is found at 1–126 (MEANHQRNDL…ACYQGQLILV (126 aa)). The ABC transmembrane type-1 domain maps to 155–437 (FLETLIVSIF…LAQLWQDFQQ (283 aa)). Transmembrane regions (helical) follow at residues 159–179 (LIVS…FQVV), 192–212 (LNII…LSGL), 270–290 (ALTS…MWYY), 296–316 (LVIL…SPIL), and 389–409 (VMVI…LSIG). Residues 469-704 (ISFKNIRFRY…SNGLYSYLHQ (236 aa)) enclose the ABC transporter domain. 503–510 (GRSGSGKS) contacts ATP.

The protein belongs to the ABC transporter superfamily. Protein-1 exporter (TC 3.A.1.109) family. As to quaternary structure, homodimer.

The protein localises to the cell inner membrane. It carries out the reaction ATP + H2O + proteinSide 1 = ADP + phosphate + proteinSide 2.. Its function is as follows. Part of the ABC transporter complex LktBD involved in leukotoxin export. Transmembrane domains (TMD) form a pore in the inner membrane and the ATP-binding domain (NBD) is responsible for energy generation. This is Leukotoxin translocation ATP-binding protein LktB (lktB) from Mannheimia haemolytica (Pasteurella haemolytica).